Reading from the N-terminus, the 154-residue chain is Endoribonuclease YbeY (154 aa).

Residues His-114, His-118, and His-124 each contribute to the Zn(2+) site.

Belongs to the endoribonuclease YbeY family. Requires Zn(2+) as cofactor.

It is found in the cytoplasm. In terms of biological role, single strand-specific metallo-endoribonuclease involved in late-stage 70S ribosome quality control and in maturation of the 3' terminus of the 16S rRNA. This chain is Endoribonuclease YbeY, found in Anaplasma phagocytophilum (strain HZ).